The chain runs to 76 residues: Sec-independent protein translocase protein TatA (76 aa).

Residues 1–21 traverse the membrane as a helical segment; that stretch reads MGSFSIWHWLIVLVIVMLVFG. Composition is skewed to basic and acidic residues over residues 41–50 and 57–76; these read DGMKDGEDKG and KELR…SRQQ. The segment at 41–76 is disordered; the sequence is DGMKDGEDKGAQPAASKELRDSTTIDVDAKEKSRQQ.

This sequence belongs to the TatA/E family. The Tat system comprises two distinct complexes: a TatABC complex, containing multiple copies of TatA, TatB and TatC subunits, and a separate TatA complex, containing only TatA subunits. Substrates initially bind to the TatABC complex, which probably triggers association of the separate TatA complex to form the active translocon.

It localises to the cell inner membrane. In terms of biological role, part of the twin-arginine translocation (Tat) system that transports large folded proteins containing a characteristic twin-arginine motif in their signal peptide across membranes. TatA could form the protein-conducting channel of the Tat system. In Cupriavidus taiwanensis (strain DSM 17343 / BCRC 17206 / CCUG 44338 / CIP 107171 / LMG 19424 / R1) (Ralstonia taiwanensis (strain LMG 19424)), this protein is Sec-independent protein translocase protein TatA.